Here is an 829-residue protein sequence, read N- to C-terminus: Leucine--tRNA ligase (829 aa).

The short motif at 40 to 50 (PYPSGNIHMGH) is the 'HIGH' region element. A 'KMSKS' region motif is present at residues 581–585 (KMSKS). An ATP-binding site is contributed by Lys584.

The protein belongs to the class-I aminoacyl-tRNA synthetase family.

It is found in the cytoplasm. The catalysed reaction is tRNA(Leu) + L-leucine + ATP = L-leucyl-tRNA(Leu) + AMP + diphosphate. The protein is Leucine--tRNA ligase of Nitratidesulfovibrio vulgaris (strain DP4) (Desulfovibrio vulgaris).